A 189-amino-acid polypeptide reads, in one-letter code: UPF0301 protein CTA_0231 (189 aa).

Belongs to the UPF0301 (AlgH) family.

The chain is UPF0301 protein CTA_0231 from Chlamydia trachomatis serovar A (strain ATCC VR-571B / DSM 19440 / HAR-13).